The following is a 3092-amino-acid chain: Inhibitory regulator protein IRA1 (3092 aa).

2 disordered regions span residues 375–430 (HLHH…MASL) and 450–487 (LGQANTSTSTTAATTKTDADTPSTMNTNNNNNNNNSAN). Positions 379–400 (SSSSSKTTNTNSPNSISKTSIK) are enriched in low complexity. The segment covering 401–430 (QSSVNASGNVSPSQFSTGNDASPTSPMASL) has biased composition (polar residues). The span at 455-487 (TSTSTTAATTKTDADTPSTMNTNNNNNNNNSAN) shows a compositional bias: low complexity. Residues Ser497 and Ser915 each carry the phosphoserine modification. 2 disordered regions span residues 946-988 (SGVP…VLSS) and 1003-1023 (TILKNIKSPKPNKTKKIADDK). The span at 965-988 (QSPYSSPPQLQQSDLPSPLSVLSS) shows a compositional bias: low complexity. Ser1342 is modified (phosphoserine). Positions 1725–1930 (NASHILVTEL…DKIFNFLSEL (206 aa)) constitute a Ras-GAP domain. Residues Ser1753 and Ser3004 each carry the phosphoserine; by PKA modification.

The protein resides in the cytoplasm. Functionally, inhibitory regulator of the Ras-cyclic AMP pathway in S.cerevisiae. Stimulates the GTPase activity of Ras proteins. The polypeptide is Inhibitory regulator protein IRA1 (IRA1) (Saccharomyces cerevisiae (strain ATCC 204508 / S288c) (Baker's yeast)).